The chain runs to 82 residues: Splicing factor U2AF 35 kDa subunit (82 aa).

Ala2 carries the N-acetylalanine modification. The C3H1-type zinc-finger motif lies at 12–40; it reads EKDKVNCSFYFKIGACRHGDRCSRLHNKP. An N6-methyllysine modification is found at Lys39. An RRM domain is found at 65–82; that stretch reads SHCHVSDVEVQEHYDNFF.

Belongs to the splicing factor SR family. As to quaternary structure, identified in the spliceosome C complex. Heterodimer with U2AF2. Interacts (via RS domain) with PHF5A (via N-terminus). Interacts with ZRANB2. Interacts with SDE2. Interacts with SF3B1.

Its subcellular location is the nucleus. It localises to the nucleus speckle. Plays a critical role in both constitutive and enhancer-dependent splicing by mediating protein-protein interactions and protein-RNA interactions required for accurate 3'-splice site selection. Recruits U2 snRNP to the branch point. Directly mediates interactions between U2AF2 and proteins bound to the enhancers and thus may function as a bridge between U2AF2 and the enhancer complex to recruit it to the adjacent intron. The sequence is that of Splicing factor U2AF 35 kDa subunit (U2AF1) from Sus scrofa (Pig).